The primary structure comprises 141 residues: HTH-type transcriptional repressor NsrR (141 aa).

Positions 2 to 129 constitute an HTH rrf2-type domain; the sequence is QLTSFTDYGL…DNYTLADLVE (128 aa). The H-T-H motif DNA-binding region spans 28 to 51; that stretch reads ISQVTEVYGVSRNHMVKIINQLSR. [2Fe-2S] cluster contacts are provided by Cys91, Cys96, and Cys102.

[2Fe-2S] cluster is required as a cofactor.

Functionally, nitric oxide-sensitive repressor of genes involved in protecting the cell against nitrosative stress. May require iron for activity. This Enterobacter sp. (strain 638) protein is HTH-type transcriptional repressor NsrR.